The primary structure comprises 105 residues: U-scoloptoxin(05)-Ssd1a (105 aa).

The first 24 residues, 1–24, serve as a signal peptide directing secretion; that stretch reads MKEAVKMSCLCIFVFLFLFSLTDA. Residues 79-105 are disordered; it reads HVPESNQKDGKVSTHMSSCNTDGCNAN. Over residues 92–105 the composition is skewed to polar residues; it reads THMSSCNTDGCNAN.

The protein belongs to the scoloptoxin-05 family. In terms of processing, contains 4 disulfide bonds. In terms of tissue distribution, expressed by the venom gland.

It is found in the secreted. This chain is U-scoloptoxin(05)-Ssd1a, found in Scolopendra dehaani (Thai centipede).